We begin with the raw amino-acid sequence, 288 residues long: 4-diphosphocytidyl-2-C-methyl-D-erythritol kinase (288 aa).

Lys13 is a catalytic residue. 96 to 106 lines the ATP pocket; that stretch reads PIGGGIGGGSS. The active site involves Asp138.

This sequence belongs to the GHMP kinase family. IspE subfamily.

It carries out the reaction 4-CDP-2-C-methyl-D-erythritol + ATP = 4-CDP-2-C-methyl-D-erythritol 2-phosphate + ADP + H(+). It participates in isoprenoid biosynthesis; isopentenyl diphosphate biosynthesis via DXP pathway; isopentenyl diphosphate from 1-deoxy-D-xylulose 5-phosphate: step 3/6. Catalyzes the phosphorylation of the position 2 hydroxy group of 4-diphosphocytidyl-2C-methyl-D-erythritol. This chain is 4-diphosphocytidyl-2-C-methyl-D-erythritol kinase, found in Aliivibrio salmonicida (strain LFI1238) (Vibrio salmonicida (strain LFI1238)).